We begin with the raw amino-acid sequence, 559 residues long: Tryprostatin B 6-hydroxylase (559 aa).

3 consecutive transmembrane segments (helical) span residues 13-35 (PSVM…HLSY), 48-65 (YVRF…LLYA), and 82-104 (VSLL…RTLF). Position 502 (Cys-502) interacts with heme.

Belongs to the cytochrome P450 family. The cofactor is heme.

Its subcellular location is the membrane. It catalyses the reaction tryprostatin B + reduced [NADPH--hemoprotein reductase] + O2 = 6-hydroxytryprostatin B + oxidized [NADPH--hemoprotein reductase] + H2O + H(+). The protein operates within mycotoxin biosynthesis. Functionally, cytochrome P450 monooxygenase; part of the gene cluster that mediates the biosynthesis of fumitremorgins, indole alkaloids that carry not only intriguing chemical structures, but also interesting biological and pharmacological activities. The biosynthesis of fumitremorgin-type alkaloids begins by condensation of the two amino acids L-tryptophan and L-proline to brevianamide F, catalyzed by the non-ribosomal peptide synthetase ftmA. Brevianamide F is then prenylated by the prenyltransferase ftmPT1/ftmB in the presence of dimethylallyl diphosphate, resulting in the formation of tryprostatin B. The three cytochrome P450 monooxygenases, ftmP450-1/ftmC, ftmP450-2/ftmE and ftmP450-3/FtmG, are responsible for the conversion of tryprostatin B to 6-hydroxytryprostatin B, tryprostatin A to fumitremorgin C and fumitremorgin C to 12,13-dihydroxyfumitremorgin C, respectively. The putative methyltransferase ftmMT/ftmD is expected for the conversion of 6-hydroxytryprostatin B to tryprostatin A. FtmPT2/FtmH catalyzes the prenylation of 12,13-dihydroxyfumitre-morgin C in the presence of dimethylallyl diphosphate, resulting in the formation of fumitremorgin B. Fumitremorgin B is further converted to verruculogen by ftmOx1/ftmF via the insertion of an endoperoxide bond between the two prenyl moieties. In some fungal species, verruculogen is further converted to fumitremorgin A, but the enzymes involved in this step have not been identified yet. The sequence is that of Tryprostatin B 6-hydroxylase from Aspergillus fumigatus (Neosartorya fumigata).